A 427-amino-acid chain; its full sequence is Tryptophan synthase beta chain (427 aa).

At K100 the chain carries N6-(pyridoxal phosphate)lysine.

Belongs to the TrpB family. Tetramer of two alpha and two beta chains. The cofactor is pyridoxal 5'-phosphate.

It catalyses the reaction (1S,2R)-1-C-(indol-3-yl)glycerol 3-phosphate + L-serine = D-glyceraldehyde 3-phosphate + L-tryptophan + H2O. It participates in amino-acid biosynthesis; L-tryptophan biosynthesis; L-tryptophan from chorismate: step 5/5. The beta subunit is responsible for the synthesis of L-tryptophan from indole and L-serine. The protein is Tryptophan synthase beta chain (trpB) of Streptomyces coelicolor (strain ATCC BAA-471 / A3(2) / M145).